The sequence spans 520 residues: Cholesterol side-chain cleavage enzyme, mitochondrial (520 aa).

A mitochondrion-targeting transit peptide spans 1–39 (MLVRGLPLRSVLVKGCQPLLSAPREGPGHPRVPTGEGAG). A disordered region spans residues 19 to 47 (LLSAPREGPGHPRVPTGEGAGMSSHSPRP). Cys461 lines the heme pocket.

It belongs to the cytochrome P450 family. In terms of assembly, interacts with FDX1/adrenodoxin. The cofactor is heme.

It localises to the mitochondrion inner membrane. The catalysed reaction is 6 reduced [adrenodoxin] + cholesterol + 3 O2 + 6 H(+) = 4-methylpentanal + pregnenolone + 6 oxidized [adrenodoxin] + 4 H2O. The enzyme catalyses 2 reduced [adrenodoxin] + cholesterol + O2 + 2 H(+) = (22R)-hydroxycholesterol + 2 oxidized [adrenodoxin] + H2O. It catalyses the reaction (22R)-hydroxycholesterol + 2 reduced [adrenodoxin] + O2 + 2 H(+) = (20R,22R)-20,22-dihydroxycholesterol + 2 oxidized [adrenodoxin] + H2O. It carries out the reaction (20R,22R)-20,22-dihydroxycholesterol + 2 reduced [adrenodoxin] + O2 + 2 H(+) = 4-methylpentanal + pregnenolone + 2 oxidized [adrenodoxin] + 2 H2O. It participates in lipid metabolism; C21-steroid hormone metabolism. The protein operates within steroid metabolism; cholesterol metabolism. Its function is as follows. A cytochrome P450 monooxygenase that catalyzes the side-chain hydroxylation and cleavage of cholesterol to pregnenolone, the precursor of most steroid hormones. Catalyzes three sequential oxidation reactions of cholesterol, namely the hydroxylation at C22 followed with the hydroxylation at C20 to yield 20R,22R-hydroxycholesterol that is further cleaved between C20 and C22 to yield the C21-steroid pregnenolone and 4-methylpentanal. Mechanistically, uses molecular oxygen inserting one oxygen atom into a substrate and reducing the second into a water molecule. Two electrons are provided by NADPH via a two-protein mitochondrial transfer system comprising flavoprotein FDXR (adrenodoxin/ferredoxin reductase) and nonheme iron-sulfur protein FDX1 or FDX2 (adrenodoxin/ferredoxin). This is Cholesterol side-chain cleavage enzyme, mitochondrial (CYP11A1) from Equus caballus (Horse).